We begin with the raw amino-acid sequence, 170 residues long: Lipoprotein signal peptidase (170 aa).

The next 3 helical transmembrane spans lie at Phe-9 to Val-29, Ile-72 to Glu-92, and Ile-96 to Arg-118. Catalysis depends on residues Asp-124 and Asp-146. The chain crosses the membrane as a helical span at residues Asn-143 to Ile-163.

This sequence belongs to the peptidase A8 family.

The protein resides in the cell inner membrane. It catalyses the reaction Release of signal peptides from bacterial membrane prolipoproteins. Hydrolyzes -Xaa-Yaa-Zaa-|-(S,diacylglyceryl)Cys-, in which Xaa is hydrophobic (preferably Leu), and Yaa (Ala or Ser) and Zaa (Gly or Ala) have small, neutral side chains.. It functions in the pathway protein modification; lipoprotein biosynthesis (signal peptide cleavage). In terms of biological role, this protein specifically catalyzes the removal of signal peptides from prolipoproteins. This is Lipoprotein signal peptidase from Borreliella afzelii (strain PKo) (Borrelia afzelii).